Consider the following 445-residue polypeptide: Rab GDP dissociation inhibitor beta (445 aa).

Met-1 is subject to N-acetylmethionine. Lys-57 bears the N6-succinyllysine mark. Position 112 is an N6-acetyllysine (Lys-112). Residue Ser-130 is modified to Phosphoserine. At Lys-269 the chain carries N6-acetyllysine. Ser-382 is modified (phosphoserine).

Belongs to the Rab GDI family. In terms of assembly, interacts with RHOH. Interacts with the GDP-bound inactive forms of RAB3A, RAB3B, RAB3C, RAB5A, RAB5B, RAB5C, RAB8A, RAB8B, RAB10, RAB12, RAB35, and RAB43; binds RAB3D to a lesser extent. Interacts with DZIP1; this interaction negatively regulates the interaction of GDI2 with GDP-bound RAB8A. In terms of tissue distribution, ubiquitously expressed.

Its subcellular location is the cytoplasm. The protein localises to the membrane. It is found in the golgi apparatus. The protein resides in the trans-Golgi network. Its function is as follows. GDP-dissociation inhibitor preventing the GDP to GTP exchange of most Rab proteins. By keeping these small GTPases in their inactive GDP-bound form regulates intracellular membrane trafficking. Negatively regulates protein transport to the cilium and ciliogenesis through the inhibition of RAB8A. This chain is Rab GDP dissociation inhibitor beta (Gdi2), found in Rattus norvegicus (Rat).